Consider the following 365-residue polypeptide: Anhydro-N-acetylmuramic acid kinase (365 aa).

Residue 9 to 16 coordinates ATP; that stretch reads GTSLDGVD.

Belongs to the anhydro-N-acetylmuramic acid kinase family.

The catalysed reaction is 1,6-anhydro-N-acetyl-beta-muramate + ATP + H2O = N-acetyl-D-muramate 6-phosphate + ADP + H(+). It functions in the pathway amino-sugar metabolism; 1,6-anhydro-N-acetylmuramate degradation. Its pathway is cell wall biogenesis; peptidoglycan recycling. Its function is as follows. Catalyzes the specific phosphorylation of 1,6-anhydro-N-acetylmuramic acid (anhMurNAc) with the simultaneous cleavage of the 1,6-anhydro ring, generating MurNAc-6-P. Is required for the utilization of anhMurNAc either imported from the medium or derived from its own cell wall murein, and thus plays a role in cell wall recycling. The sequence is that of Anhydro-N-acetylmuramic acid kinase from Zymomonas mobilis subsp. mobilis (strain ATCC 31821 / ZM4 / CP4).